Here is a 488-residue protein sequence, read N- to C-terminus: 5'-3' exonuclease PLD3 (488 aa).

Over 1–38 (MKPKLMYQELKVPVEEPAGELPMNEIEAWKAAEKKARW) the chain is Cytoplasmic. Residues 39–59 (VLLVLILAVVGFGALMTQLFL) form a helical; Signal-anchor for type II membrane protein membrane-spanning segment. The Lumenal segment spans residues 60–488 (WEYGDLHLFG…DSVGNACRLL (429 aa)). Intrachain disulfides connect cysteine 77-cysteine 237 and cysteine 81-cysteine 235. 2 N-linked (GlcNAc...) asparagine glycosylation sites follow: asparagine 97 and asparagine 132. The PLD phosphodiesterase 1 domain maps to 194–221 (THGVLHTKFWVVDQTHFYLGSANMDWRS). Catalysis depends on residues histidine 199, lysine 201, and aspartate 206. Histidine 199 acts as the Proton donor in catalysis. Phosphate is bound by residues histidine 199 and lysine 201. Position 216 (asparagine 216) interacts with phosphate. N-linked (GlcNAc...) asparagine glycans are attached at residues asparagine 234, asparagine 282, and asparagine 385. Cysteine 364 and cysteine 485 are disulfide-bonded. The PLD phosphodiesterase 2 domain occupies 409 to 435 (YARVNHNKYMVTERTTYIGTSNWSGSY). Histidine 414 contacts phosphate. The active-site Nucleophile is histidine 414. Position 436 (phenylalanine 436) interacts with Mg(2+).

It belongs to the phospholipase D family. In terms of assembly, homodimer. Interacts with APP. Post-translationally, N-glycosylated. Proteolytically processed to a soluble form that is stable within endosomes and lysosomes. During transport through the secretory pathway becomes proteolysed by cysteine proteases, thereby releasing a stable soluble lysosomal lumenal polypeptide, whereas the transmembrane-bound fragment is rapidly degraded. Its transport route to lysosomes involves ubiquitination and the ESCRT complex. In terms of processing, ubiquitinated. Ubiquitination mediates sorting into lysosomes.

Its subcellular location is the endoplasmic reticulum membrane. The protein resides in the lysosome lumen. It localises to the early endosome membrane. It is found in the late endosome membrane. The protein localises to the golgi apparatus membrane. Its subcellular location is the endosome membrane. The enzyme catalyses Exonucleolytic cleavage in the 5'- to 3'-direction to yield nucleoside 3'-phosphates.. The catalysed reaction is a 5'-end 5'-dephospho-ribonucleotidyl-ribonucleotide-RNA + H2O = a ribonucleoside 3'-phosphate + a 5'-end dephospho-ribonucleoside-RNA + H(+). It carries out the reaction a ribonucleoside 3'-phosphate-2'-3'-cyclophospho-GMP + H2O = a ribonucleoside 3'-phosphate + 2',3'-cyclophospho-GMP + H(+). It catalyses the reaction a 5'-end 5'-dephospho-2'-deoxyribonucleotidyl-2'-deoxyribonucleotide in single-stranded DNA + H2O = a 5'-end dephospho-2'-deoxyribonucleoside in single-stranded DNA + a 2'-deoxyribonucleoside 3'-phosphate + H(+). The enzyme catalyses a 5'-end 5'-phospho-2'-deoxyribonucleotide in single-stranded DNA + H2O = a 5'-end 5'-dephospho-2'-deoxyribonucleotide in single-stranded DNA + phosphate. The catalysed reaction is a 3-lyso-sn-glycero-1-phospho-(3'-acyl-1'-sn-glycerol) + a 1-acyl-sn-glycerol = a 3-acyl-sn-glycero-1-phospho-(3'-acyl-1'-sn-glycerol) + glycerol. It carries out the reaction 3-lyso-sn-glycero-1-phospho-(3'-(9Z-octadecenoyl)-1'-sn-glycerol) + 1-(9Z-octadecenoyl)-sn-glycerol = 3-(9Z-octadecenoyl)-sn-glycero-1-phospho-(3'-(9Z-octadecenoyl)-1'-sn-glycerol) + glycerol. 5'-&gt;3' exonuclease that hydrolyzes the phosphodiester bond of single-stranded DNA (ssDNA) and RNA molecules to form nucleoside 3'-monophosphates and 5'-end 5'-hydroxy deoxyribonucleotide/ribonucleotide fragments. Partially redundant with PLD4, can cleave all four nucleotides displaying higher efficiency for ssDNA and RNA fragments initiated with uridine and guanosine residues and lower efficiency for cytidine-initiated substrates. As a result, it does not always degrade polynucleotides to the single nucleotide level, it can stall at specific sites sparing certain fragments from exonucleolytic degradation. Processes self and pathogenic ssDNA and RNA molecules that reach the endolysosomal compartment via phagocytosis or autophagy and may serve as 'danger' signals for recognition by innate immune receptors such as toll-like receptors (TLRs). Degrades mitochondrial CpG-rich ssDNA fragments to prevent TLR9 activation and autoinflammatory response, but it can cleave viral RNA to generate ligands for TLR7 activation and initiate antiviral immune responses. In plasmacytoid dendritic cells, it cooperates with endonuclease RNASET2 to release 2',3'-cyclic guanosine monophosphate (2',3'-cGMP), a potent stimulatory ligand for TLR7. Produces 2',3'-cGMPs and cytidine-rich RNA fragments that occupy TLR7 ligand-binding pockets and trigger a signaling-competent state. Can exert polynucleotide phosphatase activity toward 5'-phosphorylated ssDNA substrates although at a slow rate. Transphosphatidylase that catalyzes the exchange with R to S stereo-inversion of the glycerol moiety between (S,R)-lysophosphatidylglycerol (LPG) and monoacylglycerol (MAG) substrates to yield (S,S)-bis(monoacylglycero)phosphate (BMP). Can synthesize a variety of (S,S)-BMPs representing the main phospholipid constituent of lysosomal intralumenal vesicle (ILV) membranes that bind acid hydrolases for lipid degradation. Regulates the homeostasis and interorganellar communication of the endolysosomal system with an overall impact on cellular removal of dysfunctional organelles via autophagy as well as proper protein and lipid turnover. May play a role in myotube formation in response to ER stress. This is 5'-3' exonuclease PLD3 (Pld3) from Rattus norvegicus (Rat).